The primary structure comprises 545 residues: Membrane protein insertase YidC (545 aa).

The next 4 membrane-spanning stretches (helical) occupy residues 350-370 (IIGN…AVLY), 424-444 (LPML…FASV), 461-481 (ADPY…QTYL), and 498-518 (PLVF…YWVV).

This sequence belongs to the OXA1/ALB3/YidC family. Type 1 subfamily. Interacts with the Sec translocase complex via SecD. Specifically interacts with transmembrane segments of nascent integral membrane proteins during membrane integration.

The protein resides in the cell inner membrane. In terms of biological role, required for the insertion and/or proper folding and/or complex formation of integral membrane proteins into the membrane. Involved in integration of membrane proteins that insert both dependently and independently of the Sec translocase complex, as well as at least some lipoproteins. Aids folding of multispanning membrane proteins. The polypeptide is Membrane protein insertase YidC (Neisseria meningitidis serogroup C (strain 053442)).